The chain runs to 552 residues: Dihydroxy-acid dehydratase (552 aa).

Residue aspartate 78 participates in Mg(2+) binding. A [2Fe-2S] cluster-binding site is contributed by cysteine 119. Positions 120 and 121 each coordinate Mg(2+). The residue at position 121 (lysine 121) is an N6-carboxylysine. Cysteine 191 contacts [2Fe-2S] cluster. Glutamate 442 is a binding site for Mg(2+). Serine 468 serves as the catalytic Proton acceptor.

It belongs to the IlvD/Edd family. Homodimer. Requires [2Fe-2S] cluster as cofactor. It depends on Mg(2+) as a cofactor.

The enzyme catalyses (2R)-2,3-dihydroxy-3-methylbutanoate = 3-methyl-2-oxobutanoate + H2O. It carries out the reaction (2R,3R)-2,3-dihydroxy-3-methylpentanoate = (S)-3-methyl-2-oxopentanoate + H2O. It participates in amino-acid biosynthesis; L-isoleucine biosynthesis; L-isoleucine from 2-oxobutanoate: step 3/4. The protein operates within amino-acid biosynthesis; L-valine biosynthesis; L-valine from pyruvate: step 3/4. In terms of biological role, functions in the biosynthesis of branched-chain amino acids. Catalyzes the dehydration of (2R,3R)-2,3-dihydroxy-3-methylpentanoate (2,3-dihydroxy-3-methylvalerate) into 2-oxo-3-methylpentanoate (2-oxo-3-methylvalerate) and of (2R)-2,3-dihydroxy-3-methylbutanoate (2,3-dihydroxyisovalerate) into 2-oxo-3-methylbutanoate (2-oxoisovalerate), the penultimate precursor to L-isoleucine and L-valine, respectively. The protein is Dihydroxy-acid dehydratase of Clostridium botulinum (strain Eklund 17B / Type B).